A 439-amino-acid chain; its full sequence is Signal recognition particle 54 kDa protein (439 aa).

Residues 104–111, 184–188, and 242–245 each bind GTP; these read GLQGSGKT, DTAGR, and SKLD.

It belongs to the GTP-binding SRP family. SRP54 subfamily. Part of the signal recognition particle protein translocation system, which is composed of SRP and FtsY. Archaeal SRP consists of a 7S RNA molecule of 300 nucleotides and two protein subunits: SRP54 and SRP19.

Its subcellular location is the cytoplasm. It catalyses the reaction GTP + H2O = GDP + phosphate + H(+). Its function is as follows. Involved in targeting and insertion of nascent membrane proteins into the cytoplasmic membrane. Binds to the hydrophobic signal sequence of the ribosome-nascent chain (RNC) as it emerges from the ribosomes. The SRP-RNC complex is then targeted to the cytoplasmic membrane where it interacts with the SRP receptor FtsY. This Methanococcoides burtonii (strain DSM 6242 / NBRC 107633 / OCM 468 / ACE-M) protein is Signal recognition particle 54 kDa protein.